Consider the following 276-residue polypeptide: Membrane protein insertase YidC 2 (276 aa).

Positions 1–22 (MGVKKKLKLTSLLGLSLLIMTA) are cleaved as a signal peptide. Residue Cys23 is the site of N-palmitoyl cysteine attachment. Residue Cys23 is the site of S-diacylglycerol cysteine attachment. A run of 4 helical transmembrane segments spans residues 58-78 (ISIG…LLPV), 130-150 (SDSL…FQAL), 169-189 (VDTT…STWL), and 207-227 (GIPV…ALYW).

The protein belongs to the OXA1/ALB3/YidC family. Type 2 subfamily. In terms of assembly, interacts with KhpB (also called EloR/Jag).

It localises to the cell membrane. Functionally, required for the insertion and/or proper folding and/or complex formation of integral membrane proteins into the membrane. Involved in integration of membrane proteins that insert both dependently and independently of the Sec translocase complex, as well as at least some lipoproteins. This is Membrane protein insertase YidC 2 from Streptococcus pneumoniae (strain ATCC BAA-255 / R6).